Here is a 43-residue protein sequence, read N- to C-terminus: Photosystem I reaction center subunit IX (43 aa).

The helical transmembrane segment at 7–27 (YLSVAPVLSALWFGALAGLLI) threads the bilayer.

This sequence belongs to the PsaJ family.

The protein resides in the plastid. It is found in the chloroplast thylakoid membrane. In terms of biological role, may help in the organization of the PsaE and PsaF subunits. The chain is Photosystem I reaction center subunit IX from Oenothera argillicola (Appalachian evening primrose).